The primary structure comprises 110 residues: Thiosulfate sulfurtransferase GlpE (110 aa).

Positions 17-105 (KQEGAVVVDI…WRATYPAETA (89 aa)) constitute a Rhodanese domain. Cysteine 65 functions as the Cysteine persulfide intermediate in the catalytic mechanism.

This sequence belongs to the GlpE family.

The protein localises to the cytoplasm. The catalysed reaction is thiosulfate + hydrogen cyanide = thiocyanate + sulfite + 2 H(+). The enzyme catalyses thiosulfate + [thioredoxin]-dithiol = [thioredoxin]-disulfide + hydrogen sulfide + sulfite + 2 H(+). Transferase that catalyzes the transfer of sulfur from thiosulfate to thiophilic acceptors such as cyanide or dithiols. May function in a CysM-independent thiosulfate assimilation pathway by catalyzing the conversion of thiosulfate to sulfite, which can then be used for L-cysteine biosynthesis. In Pseudomonas putida (strain GB-1), this protein is Thiosulfate sulfurtransferase GlpE.